The following is an 880-amino-acid chain: Alanine--tRNA ligase (880 aa).

Zn(2+)-binding residues include histidine 567, histidine 571, cysteine 669, and histidine 673.

This sequence belongs to the class-II aminoacyl-tRNA synthetase family. The cofactor is Zn(2+).

Its subcellular location is the cytoplasm. The catalysed reaction is tRNA(Ala) + L-alanine + ATP = L-alanyl-tRNA(Ala) + AMP + diphosphate. Functionally, catalyzes the attachment of alanine to tRNA(Ala) in a two-step reaction: alanine is first activated by ATP to form Ala-AMP and then transferred to the acceptor end of tRNA(Ala). Also edits incorrectly charged Ser-tRNA(Ala) and Gly-tRNA(Ala) via its editing domain. In Bacillus thuringiensis subsp. konkukian (strain 97-27), this protein is Alanine--tRNA ligase.